The chain runs to 385 residues: A-type ATP synthase subunit C (385 aa).

The protein belongs to the V-ATPase V0D/AC39 subunit family. As to quaternary structure, has multiple subunits with at least A(3), B(3), C, D, E, F, H, I and proteolipid K(x).

Its subcellular location is the cell membrane. Its function is as follows. Component of the A-type ATP synthase that produces ATP from ADP in the presence of a proton gradient across the membrane. This chain is A-type ATP synthase subunit C, found in Methanothermobacter thermautotrophicus (strain ATCC 29096 / DSM 1053 / JCM 10044 / NBRC 100330 / Delta H) (Methanobacterium thermoautotrophicum).